Here is a 279-residue protein sequence, read N- to C-terminus: Secreted RxLR effector protein 152 (279 aa).

The N-terminal stretch at 1–22 (MRNGSVLFGLFFIGHSCSVLLA) is a signal peptide. The RxLR-dEER motif lies at 47–62 (RTLQADDSERTLAEER).

It belongs to the RxLR effector family.

The protein resides in the secreted. It is found in the host nucleus. In terms of biological role, secreted effector that completely suppresses the host cell death induced by cell death-inducing proteins. This chain is Secreted RxLR effector protein 152, found in Plasmopara viticola (Downy mildew of grapevine).